We begin with the raw amino-acid sequence, 610 residues long: 1,8-cineol synthase, chloroplastic (610 aa).

A chloroplast-targeting transit peptide spans 1 to 51 (MNHHLIITPIFHLQIMLPVATLKRPPPPAATCSIYSFSRGTPSLVSKARLS). (2E)-geranyl diphosphate contacts are provided by Arg322, Asp359, Asp363, Arg500, and Asn503. Positions 359 and 363 each coordinate Mg(2+). Positions 359-363 (DDVYD) match the DDXXD motif motif. Residues Asn503, Thr507, and Glu511 each coordinate Mg(2+).

It belongs to the terpene synthase family. Tpsb subfamily. In terms of assembly, monomer. Mg(2+) serves as cofactor. The cofactor is Mn(2+). As to expression, confined to buds and flowers.

It localises to the plastid. Its subcellular location is the chloroplast. It carries out the reaction (2E)-geranyl diphosphate + H2O = 1,8-cineole + diphosphate. The enzyme catalyses (2E)-geranyl diphosphate = limonene + diphosphate. It catalyses the reaction (2E)-geranyl diphosphate = sabinene + diphosphate. The catalysed reaction is (2E)-geranyl diphosphate = (E)-beta-ocimene + diphosphate. It carries out the reaction (2E)-geranyl diphosphate = beta-myrcene + diphosphate. The enzyme catalyses (2E)-geranyl diphosphate = alpha-pinene + diphosphate. It catalyses the reaction (2E)-geranyl diphosphate + H2O = (S)-alpha-terpineol + diphosphate. Its pathway is secondary metabolite biosynthesis; terpenoid biosynthesis. Functionally, monoterpene synthase involved in the biosynthesis of monoterpene natural products of the 'cineole cassette', volatile compounds present in floral scent. Catalyzes the conversion of (2E)-geranyl diphosphate (GPP) into 1,8-cineole and, as minor products, limonene, sabinene, (E)-beta-ocimene, beta-myrcene, alpha-pinene and alpha-terpineol. In Nicotiana suaveolens (Australian tobacco), this protein is 1,8-cineol synthase, chloroplastic.